Here is a 186-residue protein sequence, read N- to C-terminus: Ribulose bisphosphate carboxylase small subunit, chloroplastic 6 (186 aa).

Residues 1–60 constitute a chloroplast transit peptide; the sequence is MASSMLSNAAVATTAASRSAGAQASMVAPFTGLKSVSAFPVTRKSSNDLSTVPSNGGKVQ.

Belongs to the RuBisCO small chain family. Heterohexadecamer of 8 large and 8 small subunits.

The protein resides in the plastid. It localises to the chloroplast. Functionally, ruBisCO catalyzes two reactions: the carboxylation of D-ribulose 1,5-bisphosphate, the primary event in carbon dioxide fixation, as well as the oxidative fragmentation of the pentose substrate. Both reactions occur simultaneously and in competition at the same active site. Although the small subunit is not catalytic it is essential for maximal activity. The chain is Ribulose bisphosphate carboxylase small subunit, chloroplastic 6 from Mesembryanthemum crystallinum (Common ice plant).